The chain runs to 302 residues: Oxygen-dependent coproporphyrinogen-III oxidase (302 aa).

Position 94 (S94) interacts with substrate. Residues H98 and H108 each coordinate a divalent metal cation. Residue H108 is the Proton donor of the active site. Substrate is bound at residue 110-112 (NVR). Positions 147 and 177 each coordinate a divalent metal cation. Residues 242–277 (YVEFNLVYDRGTIFGLQSGGRTESILMSLPPLVRWD) are important for dimerization. 260–262 (GGR) is a binding site for substrate.

The protein belongs to the aerobic coproporphyrinogen-III oxidase family. In terms of assembly, homodimer. The cofactor is a divalent metal cation.

Its subcellular location is the cytoplasm. The catalysed reaction is coproporphyrinogen III + O2 + 2 H(+) = protoporphyrinogen IX + 2 CO2 + 2 H2O. It participates in porphyrin-containing compound metabolism; protoporphyrin-IX biosynthesis; protoporphyrinogen-IX from coproporphyrinogen-III (O2 route): step 1/1. Its function is as follows. Involved in the heme biosynthesis. Catalyzes the aerobic oxidative decarboxylation of propionate groups of rings A and B of coproporphyrinogen-III to yield the vinyl groups in protoporphyrinogen-IX. The polypeptide is Oxygen-dependent coproporphyrinogen-III oxidase (Alcanivorax borkumensis (strain ATCC 700651 / DSM 11573 / NCIMB 13689 / SK2)).